The chain runs to 264 residues: Thymidylate synthase (264 aa).

Arginine 21 is a binding site for dUMP. Histidine 51 lines the (6R)-5,10-methylene-5,6,7,8-tetrahydrofolate pocket. 126-127 is a binding site for dUMP; it reads RR. The active-site Nucleophile is the cysteine 146. DUMP-binding positions include 166–169, asparagine 177, and 207–209; these read RSVD and HLY. Residue aspartate 169 participates in (6R)-5,10-methylene-5,6,7,8-tetrahydrofolate binding. Alanine 263 contacts (6R)-5,10-methylene-5,6,7,8-tetrahydrofolate.

This sequence belongs to the thymidylate synthase family. Bacterial-type ThyA subfamily. Homodimer.

Its subcellular location is the cytoplasm. It catalyses the reaction dUMP + (6R)-5,10-methylene-5,6,7,8-tetrahydrofolate = 7,8-dihydrofolate + dTMP. It participates in pyrimidine metabolism; dTTP biosynthesis. In terms of biological role, catalyzes the reductive methylation of 2'-deoxyuridine-5'-monophosphate (dUMP) to 2'-deoxythymidine-5'-monophosphate (dTMP) while utilizing 5,10-methylenetetrahydrofolate (mTHF) as the methyl donor and reductant in the reaction, yielding dihydrofolate (DHF) as a by-product. This enzymatic reaction provides an intracellular de novo source of dTMP, an essential precursor for DNA biosynthesis. The polypeptide is Thymidylate synthase (Geobacillus thermodenitrificans (strain NG80-2)).